The primary structure comprises 214 residues: Cytochrome b (214 aa).

The next 4 membrane-spanning stretches (helical) occupy residues 31–51, 75–96, 111–131, and 176–196; these read FGSMLLACLMIQTITGFFLAI, WIMQNTXAIGASMFFICIYIHI, WLSGTTLLITLMATAFFGYVL, and FFALHFILPFIIISLSSAHIL. 2 residues coordinate heme b: Xaa-81 and His-95. Heme b contacts are provided by His-180 and His-194. His-199 provides a ligand contact to a ubiquinone.

Belongs to the cytochrome b family. As to quaternary structure, the cytochrome bc1 complex contains 3 respiratory subunits (MT-CYB, CYC1 and UQCRFS1), 2 core proteins (UQCRC1 and UQCRC2) and probably 6 low-molecular weight proteins. Heme b is required as a cofactor.

It localises to the mitochondrion inner membrane. In terms of biological role, component of the ubiquinol-cytochrome c reductase complex (complex III or cytochrome b-c1 complex) that is part of the mitochondrial respiratory chain. The b-c1 complex mediates electron transfer from ubiquinol to cytochrome c. Contributes to the generation of a proton gradient across the mitochondrial membrane that is then used for ATP synthesis. This Bothriechis schlegelii (Eyelash palm pitviper) protein is Cytochrome b (MT-CYB).